The chain runs to 168 residues: Dual-action ribosomal maturation protein DarP (168 aa).

This sequence belongs to the DarP family.

The protein resides in the cytoplasm. Functionally, member of a network of 50S ribosomal subunit biogenesis factors which assembles along the 30S-50S interface, preventing incorrect 23S rRNA structures from forming. Promotes peptidyl transferase center (PTC) maturation. This is Dual-action ribosomal maturation protein DarP from Neisseria meningitidis serogroup B (strain ATCC BAA-335 / MC58).